The chain runs to 380 residues: Cytochrome b (380 aa).

4 helical membrane passes run 34 to 54 (FGSL…LLAA), 78 to 99 (WLIR…YLHI), 114 to 134 (WNTG…GYVL), and 179 to 199 (FFTL…IHLT). Heme b contacts are provided by histidine 84 and histidine 98. Heme b contacts are provided by histidine 183 and histidine 197. Histidine 202 provides a ligand contact to a ubiquinone. 4 helical membrane passes run 227-247 (LKDI…ALFS), 289-309 (LGGV…PLLH), 321-341 (FSQL…WVGS), and 348-368 (FIII…ILFP).

It belongs to the cytochrome b family. The cytochrome bc1 complex contains 11 subunits: 3 respiratory subunits (MT-CYB, CYC1 and UQCRFS1), 2 core proteins (UQCRC1 and UQCRC2) and 6 low-molecular weight proteins (UQCRH/QCR6, UQCRB/QCR7, UQCRQ/QCR8, UQCR10/QCR9, UQCR11/QCR10 and a cleavage product of UQCRFS1). This cytochrome bc1 complex then forms a dimer. It depends on heme b as a cofactor.

The protein resides in the mitochondrion inner membrane. In terms of biological role, component of the ubiquinol-cytochrome c reductase complex (complex III or cytochrome b-c1 complex) that is part of the mitochondrial respiratory chain. The b-c1 complex mediates electron transfer from ubiquinol to cytochrome c. Contributes to the generation of a proton gradient across the mitochondrial membrane that is then used for ATP synthesis. The chain is Cytochrome b (MT-CYB) from Bugeranus carunculatus (Wattled crane).